A 549-amino-acid chain; its full sequence is Glucose-6-phosphate isomerase (549 aa).

N6-acetyllysine occurs at positions 80, 228, and 234. E355 functions as the Proton donor in the catalytic mechanism. Active-site residues include H386 and K514.

It belongs to the GPI family.

The protein resides in the cytoplasm. It carries out the reaction alpha-D-glucose 6-phosphate = beta-D-fructose 6-phosphate. It participates in carbohydrate biosynthesis; gluconeogenesis. It functions in the pathway carbohydrate degradation; glycolysis; D-glyceraldehyde 3-phosphate and glycerone phosphate from D-glucose: step 2/4. Catalyzes the reversible isomerization of glucose-6-phosphate to fructose-6-phosphate. This Escherichia coli O139:H28 (strain E24377A / ETEC) protein is Glucose-6-phosphate isomerase.